The sequence spans 447 residues: Protein O-GlcNAcase (447 aa).

Residues Met1 to Asp277 form the GH84 domain. A protein is bound by residues Gly8, Lys39, and Asp115. The Proton donor role is filled by Asp116. A protein-binding positions include Tyr160, Trp219–Asn221, Asp226, and Asn254.

This sequence belongs to the glycosyl hydrolase 84 family.

It carries out the reaction 3-O-(N-acetyl-beta-D-glucosaminyl)-L-seryl-[protein] + H2O = N-acetyl-D-glucosamine + L-seryl-[protein]. The catalysed reaction is 3-O-(N-acetyl-beta-D-glucosaminyl)-L-threonyl-[protein] + H2O = L-threonyl-[protein] + N-acetyl-D-glucosamine. Inhibited by PUGNac (O-(2-acetamido-2-deoxy-D-glucopyranosylidene)amino-N-phenylcarbamate). Functionally, cleaves GlcNAc from O-glycosylated proteins. Can use p-nitrophenyl-beta-GlcNAc and 4-methylumbelliferone-GlcNAc as substrate (in vitro). The polypeptide is Protein O-GlcNAcase (Oceanicola granulosus (strain ATCC BAA-861 / DSM 15982 / KCTC 12143 / HTCC2516)).